Here is a 198-residue protein sequence, read N- to C-terminus: TM2 domain-containing protein 2 (198 aa).

A signal peptide spans 1-27 (MRWPVPPVGYLLLGGQGLLLTFSLISS). Topologically, residues 28–128 (QNQTSPVTYP…FLRGNKPCIK (101 aa)) are extracellular. Residues N29, N40, and N76 are each glycosylated (N-linked (GlcNAc...) asparagine). The helical transmembrane segment at 129-149 (YTGHYFITTLLYSFFLGCFGV) threads the bilayer. The 49-residue stretch at 131 to 179 (GHYFITTLLYSFFLGCFGVDRFCLGHTGTAVGKLLTLGGLGIWWFVDLI) folds into the TM2 domain. Over 150–166 (DRFCLGHTGTAVGKLLT) the chain is Cytoplasmic. The chain crosses the membrane as a helical span at residues 167-187 (LGGLGIWWFVDLILLITGGLM). The Extracellular segment spans residues 188-198 (PSDNSNWCTIY).

It belongs to the TM2 family.

The protein localises to the membrane. This Xenopus tropicalis (Western clawed frog) protein is TM2 domain-containing protein 2 (tm2d2).